A 710-amino-acid chain; its full sequence is MSAKRKSFDEALAQKDVDHLTLEEAPEELERLAAEIEKHDKLYYQKDAPRISDAEYDTLRRRNEAIEARYPELVREDSPSHRVGAQPADGFGKVVHKVPMLSLSNAFDDEDVRDFALRIRRFLNLKEEDILPITAEPKIDGLSAALRYEKGKFVMGATRGDGREGENVTENLKTIGDIPAELKGKNIPDVVEVRGEVYMSHEDFAALNERQREAGKPVFANPRNAAAGSLRQLDAKITASRPLRFFAYTWGEMSDLPADTQSGVMDAFRKWGFTVNPLFGRCDTVEALIDFYHDIEERRATLGYDIDGVVYKVDRLDWQNRLGFVSRSPRWALAHKFPAEQAMTVLEKIEIQVGRTGALTPVARLTPVTVGGVVVSNATLHNADEIERLGVRPGDTVVVQRAGDVIPQIVRVVEDRPRGKKKFVFPDTCPECGSHAVREVNPKTGKLDAVARCTGGLVCPAQAVERLRHFVSRNAFDIEGLGEKQIAAFFEDGLIKKPDDIFTLAARDAKSLKKLKDREGWGATSARKLFDAIDARREVELDRFIFGLGIRHVGETNARLLARSYGTLDHFEEQMRAAADREDEAYAELLSIDGVGEVLAESIVDFFAEKHNREVLDGLREAGVKGVPLPKQETSSPVAGKTVVFTGSLEKMTRSEAKARAEQLGAKVAGSVSAKTDILVAGADAGSKLAKARELGIEILDEDQWIELAG.

Residues 53 to 57 (DAEYD), 102 to 103 (SL), and E136 contribute to the NAD(+) site. The N6-AMP-lysine intermediate role is filled by K138. 4 residues coordinate NAD(+): R159, E196, K312, and K336. Zn(2+) is bound by residues C429, C432, C453, and C459. In terms of domain architecture, BRCT spans 633-710 (ETSSPVAGKT…DEDQWIELAG (78 aa)).

The protein belongs to the NAD-dependent DNA ligase family. LigA subfamily. Mg(2+) serves as cofactor. The cofactor is Mn(2+).

The enzyme catalyses NAD(+) + (deoxyribonucleotide)n-3'-hydroxyl + 5'-phospho-(deoxyribonucleotide)m = (deoxyribonucleotide)n+m + AMP + beta-nicotinamide D-nucleotide.. Its function is as follows. DNA ligase that catalyzes the formation of phosphodiester linkages between 5'-phosphoryl and 3'-hydroxyl groups in double-stranded DNA using NAD as a coenzyme and as the energy source for the reaction. It is essential for DNA replication and repair of damaged DNA. The protein is DNA ligase of Parvibaculum lavamentivorans (strain DS-1 / DSM 13023 / NCIMB 13966).